A 427-amino-acid chain; its full sequence is Adenylosuccinate synthetase (427 aa).

GTP contacts are provided by residues 12–18 (GDEGKGK) and 40–42 (GHT). The active-site Proton acceptor is the Asp-13. Asp-13 and Gly-40 together coordinate Mg(2+). IMP is bound by residues 13 to 16 (DEGK), 38 to 41 (NAGH), Thr-128, Arg-142, Gln-223, Thr-238, and Arg-302. Residue His-41 is the Proton donor of the active site. Substrate is bound at residue 298 to 304 (TTTGRPR). Residues Arg-304, 330–332 (SID), and 412–414 (SVG) contribute to the GTP site.

It belongs to the adenylosuccinate synthetase family. As to quaternary structure, homodimer. Mg(2+) is required as a cofactor.

Its subcellular location is the cytoplasm. The catalysed reaction is IMP + L-aspartate + GTP = N(6)-(1,2-dicarboxyethyl)-AMP + GDP + phosphate + 2 H(+). It functions in the pathway purine metabolism; AMP biosynthesis via de novo pathway; AMP from IMP: step 1/2. Its function is as follows. Plays an important role in the de novo pathway of purine nucleotide biosynthesis. Catalyzes the first committed step in the biosynthesis of AMP from IMP. The sequence is that of Adenylosuccinate synthetase from Staphylococcus epidermidis (strain ATCC 35984 / DSM 28319 / BCRC 17069 / CCUG 31568 / BM 3577 / RP62A).